The sequence spans 186 residues: Casparian strip membrane protein 3 (186 aa).

Topologically, residues 1-26 are cytoplasmic; that stretch reads MKAGALELGEGSKTSIPRGGVNRGIS. The helical transmembrane segment at 27–47 threads the bilayer; the sequence is ILDFILRLITIIGTLGSAIAM. The Extracellular segment spans residues 48–74; the sequence is GTTNETLPFFTQFTQFRAEYDDLPTFT. The N-linked (GlcNAc...) asparagine glycan is linked to Asn51. A helical transmembrane segment spans residues 75–95; it reads FFVIANSIVSGYLVLSLPMSI. Topologically, residues 96 to 107 are cytoplasmic; it reads LHIVRSGARASR. Residues 108 to 128 traverse the membrane as a helical segment; that stretch reads IVLIFFDTAMLALLTAAASAA. Topologically, residues 129 to 161 are extracellular; it reads SAIVYLAHKGNAQANWFAICQQFKSFCERISGS. Residues 162 to 182 traverse the membrane as a helical segment; the sequence is LIGSFGGIILFILLVLLSAVA. Residues 183-186 are Cytoplasmic-facing; sequence LSRC.

This sequence belongs to the Casparian strip membrane proteins (CASP) family. In terms of assembly, homodimer and heterodimers.

The protein resides in the cell membrane. Regulates membrane-cell wall junctions and localized cell wall deposition. Required for establishment of the Casparian strip membrane domain (CSD) and the subsequent formation of Casparian strips, a cell wall modification of the root endodermis that determines an apoplastic barrier between the intraorganismal apoplasm and the extraorganismal apoplasm and prevents lateral diffusion. This is Casparian strip membrane protein 3 from Vitis vinifera (Grape).